Here is a 905-residue protein sequence, read N- to C-terminus: Protein translocase subunit SecA (905 aa).

ATP-binding positions include Gln-89, 107–111 (GEGKT), and Asp-502. Residues Cys-887, Cys-889, Cys-898, and His-899 each contribute to the Zn(2+) site.

Belongs to the SecA family. As to quaternary structure, monomer and homodimer. Part of the essential Sec protein translocation apparatus which comprises SecA, SecYEG and auxiliary proteins SecDF-YajC and YidC. Requires Zn(2+) as cofactor.

It localises to the cell inner membrane. The protein localises to the cytoplasm. The enzyme catalyses ATP + H2O + cellular proteinSide 1 = ADP + phosphate + cellular proteinSide 2.. Its function is as follows. Part of the Sec protein translocase complex. Interacts with the SecYEG preprotein conducting channel. Has a central role in coupling the hydrolysis of ATP to the transfer of proteins into and across the cell membrane, serving both as a receptor for the preprotein-SecB complex and as an ATP-driven molecular motor driving the stepwise translocation of polypeptide chains across the membrane. The polypeptide is Protein translocase subunit SecA (Rhizobium leguminosarum bv. trifolii (strain WSM2304)).